The chain runs to 306 residues: MYILSIETSCDDTSVAILEDNKVLSCIIKNDSKQLNPFGGIVPEIVARYHEENIIKALDLALQESNISLNQIDKVAYTNQPGLPGSLFVGEIFAKTMAYALDVECVPINHIHGHILSPFINSVPKYPFMSLIASGKTTSIFLVKSANEIIELTKTRDDAIGEIFDKVGKALGYDYPAGPKLDKYFDISKATITPSFPPVKNDFSFSGIKNKFLSIINSSKMKNEEIDTITIGSSFLKYSIDLIIKKLKYYKDEYSVDCVCIGGGVANNNYFKQEIKKLFSDSFVPESKYSTDNAAMIGFAYYEKNK.

Positions 110 and 114 each coordinate Fe cation. Substrate-binding positions include 132-136 (IASGK), Asp165, Gly178, Asp182, and Asn268. Asp292 contacts Fe cation.

The protein belongs to the KAE1 / TsaD family. Fe(2+) serves as cofactor.

It is found in the cytoplasm. The catalysed reaction is L-threonylcarbamoyladenylate + adenosine(37) in tRNA = N(6)-L-threonylcarbamoyladenosine(37) in tRNA + AMP + H(+). In terms of biological role, required for the formation of a threonylcarbamoyl group on adenosine at position 37 (t(6)A37) in tRNAs that read codons beginning with adenine. Is involved in the transfer of the threonylcarbamoyl moiety of threonylcarbamoyl-AMP (TC-AMP) to the N6 group of A37, together with TsaE and TsaB. TsaD likely plays a direct catalytic role in this reaction. This chain is tRNA N6-adenosine threonylcarbamoyltransferase, found in Malacoplasma penetrans (strain HF-2) (Mycoplasma penetrans).